The following is a 360-amino-acid chain: Bifunctional protein FolD 4, chloroplastic (360 aa).

The N-terminal 51 residues, 1–51 (MASMMFTDCSSTTTSRLIHLNRSSGTFLLRQCVGQLRLQTTASGRGCCIRS), are a transit peptide targeting the chloroplast. S52 is subject to N-acetylserine.

Belongs to the tetrahydrofolate dehydrogenase/cyclohydrolase family. As to quaternary structure, homodimer.

It localises to the plastid. It is found in the chloroplast. It carries out the reaction (6R)-5,10-methylene-5,6,7,8-tetrahydrofolate + NADP(+) = (6R)-5,10-methenyltetrahydrofolate + NADPH. The enzyme catalyses (6R)-5,10-methenyltetrahydrofolate + H2O = (6R)-10-formyltetrahydrofolate + H(+). It participates in one-carbon metabolism; tetrahydrofolate interconversion. Its function is as follows. Catalyzes the oxidation of 5,10-methylenetetrahydrofolate to 5,10-methenyltetrahydrofolate and then the hydrolysis of 5,10-methenyltetrahydrofolate to 10-formyltetrahydrofolate. In Arabidopsis thaliana (Mouse-ear cress), this protein is Bifunctional protein FolD 4, chloroplastic (FOLD4).